The following is a 969-amino-acid chain: Vacuolar membrane protease (969 aa).

Over 1–12 the chain is Cytoplasmic; it reads MTRVNSIIGFRP. The helical transmembrane segment at 13–33 threads the bilayer; the sequence is IPVTLLTVITYVSLFSALLFI. Residues 34–381 lie on the Vacuolar side of the membrane; the sequence is DRQPPAVAKK…RAFSVLHLHT (348 aa). N125 carries N-linked (GlcNAc...) asparagine glycosylation. Positions 166 and 178 each coordinate Zn(2+). E216 serves as the catalytic Proton acceptor. Residues E217, E242, and H315 each contribute to the Zn(2+) site. N-linked (GlcNAc...) asparagine glycosylation is present at N355. The helical transmembrane segment at 382-402 threads the bilayer; sequence IFAFTITLIVVPFVVVLVAMW. Residues 403–438 are Cytoplasmic-facing; it reads ALGHFDKLYFFSNTAYIPPPPEHSIASRTTQGWRGV. A helical membrane pass occupies residues 439-459; the sequence is LRFPVAFVAASAGVVGMAFLI. At 460–469 the chain is on the vacuolar side; the sequence is NKINPMVVYA. Residues 470–490 form a helical membrane-spanning segment; that stretch reads SQYTVWTCFLSTWWIIAWVIL. The Cytoplasmic segment spans residues 491–505; the sequence is RGADAVRPTALARGY. The helical transmembrane segment at 506–526 threads the bilayer; the sequence is GFLEQWLLWLVAMIGVAISIG. Over 527-531 the chain is Vacuolar; that stretch reads KSHLG. A helical membrane pass occupies residues 532–552; that stretch reads SGYWVLVFYSGFFTSAFISLL. The Cytoplasmic portion of the chain corresponds to 553 to 662; it reads EMAALQKKSE…WSKDLPSWTW (110 aa). The disordered stretch occupies residues 571–629; the sequence is DQAYPPEEHSQTGASGNISNRAANDDDDAGEHATEETPLFRGPNRPLSFAPHRNPRYDN. Positions 581–592 are enriched in polar residues; the sequence is QTGASGNISNRA. Residues 663 to 683 form a helical membrane-spanning segment; sequence ILQFLATVPLQLVLAGSVALL. Over 684-698 the chain is Vacuolar; that stretch reads LGNALAQTGADGSDM. A helical transmembrane segment spans residues 699–719; sequence LTVLLGFGVFSIILLLPVAPF. Residues 720 to 727 lie on the Cytoplasmic side of the membrane; it reads LHRITYHV. Residues 728–748 form a helical membrane-spanning segment; sequence TLFIFVIFVGTFIYNLAAPPF. Topologically, residues 749–969 are vacuolar; it reads SPNARLKVYF…LVEGSVPFMI (221 aa). Residue N840 is glycosylated (N-linked (GlcNAc...) asparagine).

The protein belongs to the peptidase M28 family. Zn(2+) is required as a cofactor.

It is found in the vacuole membrane. May be involved in vacuolar sorting and osmoregulation. This is Vacuolar membrane protease from Tuber melanosporum (strain Mel28) (Perigord black truffle).